Reading from the N-terminus, the 266-residue chain is 3-deoxy-manno-octulosonate cytidylyltransferase 1 (266 aa).

It belongs to the KdsB family.

Its subcellular location is the cytoplasm. The catalysed reaction is 3-deoxy-alpha-D-manno-oct-2-ulosonate + CTP = CMP-3-deoxy-beta-D-manno-octulosonate + diphosphate. It participates in nucleotide-sugar biosynthesis; CMP-3-deoxy-D-manno-octulosonate biosynthesis; CMP-3-deoxy-D-manno-octulosonate from 3-deoxy-D-manno-octulosonate and CTP: step 1/1. Its pathway is bacterial outer membrane biogenesis; lipopolysaccharide biosynthesis. In terms of biological role, activates KDO (a required 8-carbon sugar) for incorporation into bacterial lipopolysaccharide in Gram-negative bacteria. The chain is 3-deoxy-manno-octulosonate cytidylyltransferase 1 from Paraburkholderia phytofirmans (strain DSM 17436 / LMG 22146 / PsJN) (Burkholderia phytofirmans).